A 380-amino-acid chain; its full sequence is L-lactate dehydrogenase (380 aa).

In terms of domain architecture, FMN hydroxy acid dehydrogenase spans 1 to 380 (MIISSASDYR…DASILVKAVA (380 aa)). Tyr-24 is a substrate binding site. FMN contacts are provided by Ser-106 and Gln-127. Tyr-129 contacts substrate. Residue Thr-155 participates in FMN binding. Position 164 (Arg-164) interacts with substrate. Lys-251 provides a ligand contact to FMN. Catalysis depends on His-275, which acts as the Proton acceptor. Arg-278 is a binding site for substrate. 306 to 330 (DSGIRSGLDVVRMLALGAKGVLLGR) serves as a coordination point for FMN.

This sequence belongs to the FMN-dependent alpha-hydroxy acid dehydrogenase family. As to quaternary structure, homotetramer. FMN serves as cofactor.

It is found in the cell inner membrane. It catalyses the reaction (S)-lactate + A = pyruvate + AH2. Its function is as follows. Catalyzes the conversion of L-lactate to pyruvate. Is coupled to the respiratory chain. This Pseudomonas syringae pv. syringae (strain B728a) protein is L-lactate dehydrogenase.